Consider the following 183-residue polypeptide: Ribosome-recycling factor (183 aa).

Belongs to the RRF family.

The protein localises to the cytoplasm. Functionally, responsible for the release of ribosomes from messenger RNA at the termination of protein biosynthesis. May increase the efficiency of translation by recycling ribosomes from one round of translation to another. In Ureaplasma urealyticum serovar 10 (strain ATCC 33699 / Western), this protein is Ribosome-recycling factor.